A 44-amino-acid chain; its full sequence is DVCDSLVGGRCIHNGCWCERSAPHGNCCNTGGCVWWWCPGTKWD.

4 disulfides stabilise this stretch: C3/C16, C11/C28, C18/C33, and C27/C38. W17 carries the 6'-bromotryptophan modification. At P23 the chain carries 4-hydroxyproline. A 6'-bromotryptophan mark is found at W36 and W37. The residue at position 39 (P39) is a 4-hydroxyproline. 6'-bromotryptophan is present on W43.

Expressed by the venom duct.

It localises to the secreted. In terms of biological role, mu-conotoxins block voltage-gated sodium channels. This toxin reversibly blocks voltage-gated sodium channel in cephalopods, with no alteration in the voltage dependence of sodium conductance or on the kinetics of inactivation. This chain is Mu-conotoxin-like Cal 12.1.2h, found in Californiconus californicus (California cone).